The sequence spans 90 residues: DNA-directed RNA polymerase subunit omega (90 aa).

The disordered stretch occupies residues 69-90 (RQEQQEQEAAELAAVSSIARNR).

It belongs to the RNA polymerase subunit omega family. In terms of assembly, the RNAP catalytic core consists of 2 alpha, 1 beta, 1 beta' and 1 omega subunit. When a sigma factor is associated with the core the holoenzyme is formed, which can initiate transcription.

It catalyses the reaction RNA(n) + a ribonucleoside 5'-triphosphate = RNA(n+1) + diphosphate. Its function is as follows. Promotes RNA polymerase assembly. Latches the N- and C-terminal regions of the beta' subunit thereby facilitating its interaction with the beta and alpha subunits. The protein is DNA-directed RNA polymerase subunit omega of Vibrio vulnificus (strain CMCP6).